We begin with the raw amino-acid sequence, 1007 residues long: Glutamate receptor ionotropic, delta-2 (1007 aa).

The signal sequence occupies residues 1–23 (MEVFPLLLFLSFCWSRTWDLATA). Residues 24–345 (DSIIHIGAIF…NAFHKKLEDR (322 aa)) are interaction with CBLN1 homotrimer. Topologically, residues 24-566 (DSIIHIGAIF…DMFACLAPFD (543 aa)) are extracellular. 3 cysteine pairs are disulfide-bonded: Cys83–Cys355, Cys99–Cys131, and Cys298–Cys310. N-linked (GlcNAc...) asparagine glycosylation occurs at Asn293. N-linked (GlcNAc...) asparagine glycosylation is present at Asn426. Ca(2+) contacts are provided by Glu531, Val534, and Asp535. The helical transmembrane segment at 567 to 587 (LSLWACIAGTVLLVGLLVYLL) threads the bilayer. Residues 588-635 (NWLNPPRLQMGSMTSTTLYNSMWFVYGSFVQQGGEVPYTTLATRMMMG) lie on the Cytoplasmic side of the membrane. Residues 636 to 656 (AWWLFALIVISSYTANLAAFL) form a helical membrane-spanning segment. At 657-830 (TITRIESSIQ…QKGGALDIKS (174 aa)) the chain is on the extracellular side. N-linked (GlcNAc...) asparagine glycans are attached at residues Asn713 and Asn716. Residues Asp753, Asp755, and Ser757 each contribute to the Ca(2+) site. The chain crosses the membrane as a helical span at residues 831-851 (LAGVFCILAAGIVLSCLIAVL). The Cytoplasmic portion of the chain corresponds to 852–1007 (ETWWSRRKGS…GNDPDRGTSI (156 aa)). Ser883 bears the Phosphoserine mark. Residue Thr886 is modified to Phosphothreonine. Ser890 is modified (phosphoserine). Positions 921–991 (DFRNTHITTT…MSSIPYQPTP (71 aa)) are interaction with AP4M1. The short motif at 1005–1007 (TSI) is the PDZ-binding element. At Ser1006 the chain carries Phosphoserine.

This sequence belongs to the glutamate-gated ion channel (TC 1.A.10.1) family. GRID2 subfamily. As to quaternary structure, tetramer; dimer of dimers. Interacts with EML2, MAGI2 (via PDZ domains) and AP4M1. Interacts with BECN1, GOPC, GRID2IP, SHANK1 and SHANK2. Interacts with CBLN2, but not with CBLN4. Interacts with CBLN1 (via C1q domain); the interaction is CBLN1-NRX1 complex formation-dependent; CBLN1-binding is calcium-independent; CBLN1 hexamers anchor GRID2 N-terminal domain dimers to monomeric NRXN1 isoform beta; promotes synaptogenesis and mediates the D-Serine-dependent long term depression signals and AMPA receptor endocytosis. As to expression, expressed selectively in cerebellar Purkinje cells where it is localized in dendritic spines.

The protein localises to the postsynaptic cell membrane. The catalysed reaction is Ca(2+)(in) = Ca(2+)(out). It carries out the reaction Na(+)(in) = Na(+)(out). Its function is as follows. Member of the ionotropic glutamate receptor family, which plays a crucial role in synaptic organization and signal transduction in the central nervous system. Although it shares structural features with ionotropic glutamate receptors, does not bind glutamate as a primary ligand. Promotes synaptogenesis and mediates the D-Serine-dependent long term depression signals and AMPA receptor endocytosis of cerebellar parallel fiber-Purkinje cell (PF-PC) synapses through the NRX1B-CBLN1-GRID2 triad complex. In the presence of neurexins and cerebellins, forms cation-selective channels that are proposed to be gated by glycine and D-serine. However, recent research disputes this ligand-gated cation channel activity. Cation-selective ion channel activity can be triggered by GRM1 in Purkinje cells. This Mus musculus (Mouse) protein is Glutamate receptor ionotropic, delta-2 (Grid2).